The sequence spans 327 residues: Mitochondrial coenzyme A transporter SLC25A42 (327 aa).

Solcar repeat units lie at residues 34 to 120 (KSVL…YKKL), 132 to 217 (LTPI…LKKL), and 227 to 315 (PYTF…TQIL). The next 6 helical transmembrane spans lie at 36–56 (VLNSLTSGALAGAVAKTAVAP), 92–112 (LWRGNSATMVRVIPYAAIQFC), 138–158 (LLAGALAGTTATLLTYPLDLV), 192–209 (GFTPTVLGVIPYAGISFF), 233–253 (LLFGACAGLFGQSSSYPLDVV), and 296–316 (VKGPVAVGISFTTFDLTQILL).

Belongs to the mitochondrial carrier (TC 2.A.29) family.

It localises to the mitochondrion inner membrane. The catalysed reaction is ADP(out) + CoA(in) = ADP(in) + CoA(out). It carries out the reaction 3'-dephospho-CoA(in) + ADP(out) = 3'-dephospho-CoA(out) + ADP(in). It catalyses the reaction adenosine 3',5'-bisphosphate(in) + ADP(out) = adenosine 3',5'-bisphosphate(out) + ADP(in). The enzyme catalyses AMP(in) + ADP(out) = AMP(out) + ADP(in). The catalysed reaction is dADP(in) + ADP(out) = dADP(out) + ADP(in). It carries out the reaction ADP(in) + ATP(out) = ADP(out) + ATP(in). Functionally, mitochondrial carrier mediating the transport of coenzyme A (CoA) in mitochondria in exchange for intramitochondrial (deoxy)adenine nucleotides and adenosine 3',5'-diphosphate. The polypeptide is Mitochondrial coenzyme A transporter SLC25A42 (slc25a42) (Xenopus laevis (African clawed frog)).